The sequence spans 245 residues: Probable phosphatase YcdX (245 aa).

H7, H9, H15, H40, E73, H101, H131, D192, and H194 together coordinate Zn(2+).

This sequence belongs to the PHP family. Homotrimer. Requires Zn(2+) as cofactor.

This chain is Probable phosphatase YcdX, found in Escherichia coli (strain K12 / MC4100 / BW2952).